The sequence spans 245 residues: DNA repair protein RecO (245 aa).

Belongs to the RecO family.

Its function is as follows. Involved in DNA repair and RecF pathway recombination. The chain is DNA repair protein RecO from Bartonella bacilliformis (strain ATCC 35685 / KC583 / Herrer 020/F12,63).